Reading from the N-terminus, the 135-residue chain is Small ribosomal subunit protein uS9 (135 aa).

A compositionally biased stretch (basic and acidic residues) spans 107 to 118 (LVGDPRRTEPHK). Residues 107–135 (LVGDPRRTEPHKPNRSTKGPRAKRQKSYR) are disordered. Positions 119–135 (PNRSTKGPRAKRQKSYR) are enriched in basic residues.

Belongs to the universal ribosomal protein uS9 family. Part of the 30S ribosomal subunit.

The sequence is that of Small ribosomal subunit protein uS9 from Pyrococcus furiosus (strain ATCC 43587 / DSM 3638 / JCM 8422 / Vc1).